The chain runs to 87 residues: Small ribosomal subunit protein eS21B (87 aa).

Residue methionine 1 is modified to N-acetylmethionine.

The protein belongs to the eukaryotic ribosomal protein eS21 family. Component of the small ribosomal subunit (SSU). Mature yeast ribosomes consist of a small (40S) and a large (60S) subunit. The 40S small subunit contains 1 molecule of ribosomal RNA (18S rRNA) and 33 different proteins (encoded by 57 genes). The large 60S subunit contains 3 rRNA molecules (25S, 5.8S and 5S rRNA) and 46 different proteins (encoded by 81 genes). N-terminally acetylated by acetyltransferase NatB.

It localises to the cytoplasm. Functionally, component of the ribosome, a large ribonucleoprotein complex responsible for the synthesis of proteins in the cell. The small ribosomal subunit (SSU) binds messenger RNAs (mRNAs) and translates the encoded message by selecting cognate aminoacyl-transfer RNA (tRNA) molecules. The large subunit (LSU) contains the ribosomal catalytic site termed the peptidyl transferase center (PTC), which catalyzes the formation of peptide bonds, thereby polymerizing the amino acids delivered by tRNAs into a polypeptide chain. The nascent polypeptides leave the ribosome through a tunnel in the LSU and interact with protein factors that function in enzymatic processing, targeting, and the membrane insertion of nascent chains at the exit of the ribosomal tunnel. eS21 is required for the processing of the 20S rRNA-precursor to mature 18S rRNA in a late step of the maturation of 40S ribosomal subunits. Has a physiological role leading to 18S rRNA stability. This is Small ribosomal subunit protein eS21B from Saccharomyces cerevisiae (strain ATCC 204508 / S288c) (Baker's yeast).